The following is a 1067-amino-acid chain: Protein bric-a-brac 2 (1067 aa).

A disordered region spans residues 30–121 (MAPPEEPKMV…PPRPLTSSEV (92 aa)). 2 stretches are compositionally biased toward basic and acidic residues: residues 47 to 62 (HLED…REVE) and 86 to 98 (KSPE…ELVK). Position 55 is a phosphotyrosine (Tyr-55). Ser-56, Ser-87, and Ser-147 each carry phosphoserine. Residues 223–288 (VDVTLSCEGH…MYKGEINVCQ (66 aa)) form the BTB domain. Disordered stretches follow at residues 312–412 (GRGE…QSQP), 444–505 (ANQR…AAQH), and 525–563 (GAAG…SHHD). Residues 326-335 (FDDEDEEEEL) are compositionally biased toward acidic residues. Residue Ser-377 is modified to Phosphoserine. Thr-384 is modified (phosphothreonine). Residues 391 to 412 (GGESEISERGSSGTPGQSQSQP) show a composition bias toward low complexity. Composition is skewed to gly residues over residues 525 to 538 (GAAG…GSGS) and 545 to 556 (GGTGVAGSGAGA). The HTH psq-type domain occupies 635-687 (FRERGPLKSWRPEAMAEAIFSVLKEGLSLSQAARKFDIPYPTFVLYANRVHNM). Residues 645-690 (RPEAMAEAIFSVLKEGLSLSQAARKFDIPYPTFVLYANRVHNMLGP) constitute a DNA-binding region (H-T-H motif). The a.T hook DNA-binding region spans 697 to 708 (DPRPKARGRPQR). Disordered stretches follow at residues 796–829 (QILS…PHAQ), 860–879 (AKHQ…PDLS), and 891–967 (VMPS…PYSA). The segment covering 812-829 (AHHQQQPSHHQQQSPHAQ) has biased composition (low complexity). Over residues 904 to 914 (AAPNSAASYAR) the composition is skewed to low complexity. Over residues 915–933 (ELSRERERDRERERERELS) the composition is skewed to basic and acidic residues. Low complexity predominate over residues 934 to 949 (RQYGSQSRGSSSGSGS).

In terms of tissue distribution, leg imaginal disk at the central region of the tarsus and in eye antenna disk at the basal cylinder.

The protein resides in the nucleus. In terms of biological role, probably acts as a transcriptional regulator. Required for the specification of the tarsal segment. Also involved in antenna development. The protein is Protein bric-a-brac 2 (bab2) of Drosophila melanogaster (Fruit fly).